The following is a 415-amino-acid chain: Fructose-like permease IIC component (415 aa).

The Cytoplasmic portion of the chain corresponds to 1–46; the sequence is MAIKKRSATVVHGASGAAAAVKNPQASKSSFWGELPQHVMSGISRM. Residues 35–415 enclose the PTS EIIC type-2 domain; sequence LPQHVMSGIS…RKGKLLIESL (381 aa). Residues 47 to 67 traverse the membrane as a helical segment; the sequence is VPTLIMGGVILAFSQLIAYSW. The Periplasmic portion of the chain corresponds to 68-101; it reads LKIPADIGIMDALNSGKFSGFDLSLLKFAWLSQS. The helical transmembrane segment at 102–122 threads the bilayer; that stretch reads FGGVLFGFAIPMFAAFVANSI. At 123 to 126 the chain is on the cytoplasmic side; that stretch reads GGKL. A helical membrane pass occupies residues 127 to 147; that stretch reads AFPAGFIGGLMSTQPTQLLNF. The Periplasmic segment spans residues 148–157; sequence DPSTMQWATS. Residues 158–178 traverse the membrane as a helical segment; the sequence is SPVPSTFIGALIISIVAGYLV. Over 179–197 the chain is Cytoplasmic; the sequence is KWMNQKIQLPDFLLAFKTT. A helical membrane pass occupies residues 198 to 218; sequence FLLPILSAIFVMLAMYYVITP. Residues 219 to 237 are Periplasmic-facing; sequence FGGWINGGIRTVLTAAGEK. Residues 238–258 traverse the membrane as a helical segment; that stretch reads GALMYAMGIAAATAIDLGGPI. Residues 259–276 lie on the Cytoplasmic side of the membrane; that stretch reads NKAAGFVAFSFTTDHVLP. Residues 277 to 297 form a helical membrane-spanning segment; sequence VTARSIAIVIPPIGLGLATII. The Periplasmic segment spans residues 298–318; sequence DRRLTGKRLFNAQLYPQGKTA. A helical membrane pass occupies residues 319–339; that stretch reads MFLAFMGISEGAIPFALESPI. The Cytoplasmic segment spans residues 340-341; sequence TA. The helical transmembrane segment at 342–362 threads the bilayer; that stretch reads IPSYMVGAIVGSTAAVWLGAV. Residues 363 to 378 lie on the Periplasmic side of the membrane; that stretch reads QWFPESAIWAWPLVTN. A helical transmembrane segment spans residues 379–399; the sequence is LGVYMAGIALGAIITALMVVF. The Cytoplasmic segment spans residues 400–415; the sequence is LRLMMFRKGKLLIESL.

The protein localises to the cell inner membrane. The phosphoenolpyruvate-dependent sugar phosphotransferase system (PTS), a major carbohydrate active -transport system, catalyzes the phosphorylation of incoming sugar substrates concomitant with their translocation across the cell membrane. This Escherichia coli O6:H1 (strain CFT073 / ATCC 700928 / UPEC) protein is Fructose-like permease IIC component (fryC).